The sequence spans 273 residues: Large ribosomal subunit protein uL2cz/uL2cy (273 aa).

Disordered stretches follow at residues 1–25 and 225–253; these read MAKH…VKSN and PVDH…YPAL.

This sequence belongs to the universal ribosomal protein uL2 family. Part of the 50S ribosomal subunit.

The protein resides in the plastid. Its subcellular location is the chloroplast. The protein is Large ribosomal subunit protein uL2cz/uL2cy (rpl2-A) of Triticum aestivum (Wheat).